The chain runs to 59 residues: Large ribosomal subunit protein bL32 (59 aa).

The disordered stretch occupies residues 1–59 (MAVQQNKKSPSKRGMHRSHDALTAPALSVDSTTGEVHRPHHISPNGMYRGRKVVKVKGE). The segment covering 49 to 59 (RGRKVVKVKGE) has biased composition (basic residues).

The protein belongs to the bacterial ribosomal protein bL32 family.

The polypeptide is Large ribosomal subunit protein bL32 (rpmF) (Neisseria meningitidis serogroup A / serotype 4A (strain DSM 15465 / Z2491)).